The following is a 639-amino-acid chain: MSESVKENVTPTRNFRRTQGPQNNTKPHNDRKNFRRKQKKNNLSAEPNLTTSSADDTDEENELCVICARKLTYVSLTPCHHKTCHICGFRQRALYNKKSCLICRTENEEVMFTDRIDGDISDKYNFCEKNEKYGINFTSEEVATETLNLLKFFCPLSKDEQVCDFGSFKKYNEHLKSEHNRMICLICATHKHAFPCELEIFTQNQLRNHQTKGNSEGFKGHPMCAFCSGKRFYSDDELYIHMRNQHEKCHICDKMNPASPQYFKDYNQLFDHFKHSHYVCTVQTCLDNKFVVFKDELELQAHILQEHGNILKGKPKFFQSELSTFISAPSRVIRERDDYDLPSISSLPGSSSGSRTDVRSASSPEESRLRLAERAKYYLENSKEDFNKFSSYNEDYSKGRLSAEKLLESYKLLFTKPNADVYLLIHNLAETFPKNSSKYNNLNAIYEQREQTLARQTSLPSLSSDSSLSMSIGRGHWGGTNDGGSAGAALGVRNIKNLPTLKSPSASYDPFATTVKKNTLRPVQNIKRTTPQSVSYRTSTNTVAFSPTYLESKKGSSSTSLNNSKDKLKSLNLPQLPPPKPKVQIPGLNRPQIADPKQWGKKSSTQDTNVHDNLRELNTTSGGNKKKGKQKQLLFHIGV.

Residues 1–55 (MSESVKENVTPTRNFRRTQGPQNNTKPHNDRKNFRRKQKKNNLSAEPNLTTSSAD) are disordered. Serine 2 is modified (N-acetylserine). 2 stretches are compositionally biased toward polar residues: residues 7 to 26 (ENVT…NNTK) and 43 to 54 (LSAEPNLTTSSA). At threonine 57 the chain carries Phosphothreonine. Residues 64 to 104 (CVICARKLTYVSLTPCHHKTCHICGFRQRALYNKKSCLICR) form an RING-type zinc finger. Residues 222–292 (PMCAFCSGKR…QTCLDNKFVV (71 aa)) enclose the LIM zinc-binding domain. Residues 343-354 (SISSLPGSSSGS) are compositionally biased toward low complexity. Disordered stretches follow at residues 343–367 (SISS…PEES) and 550–631 (LESK…GKQK). At serine 354 the chain carries Phosphoserine.

It belongs to the ZNF598/HEL2 family. As to quaternary structure, interacts with the E2 ubiquitin-conjugating enzyme UBC4. Interacts with histones H3 and H4.

It localises to the cytoplasm. The catalysed reaction is S-ubiquitinyl-[E2 ubiquitin-conjugating enzyme]-L-cysteine + [acceptor protein]-L-lysine = [E2 ubiquitin-conjugating enzyme]-L-cysteine + N(6)-ubiquitinyl-[acceptor protein]-L-lysine.. The protein operates within protein modification; protein ubiquitination. E3 ubiquitin-protein ligase that plays a key role in the ribosome quality control (RQC), a pathway that takes place when a ribosome has stalled during translation, leading to degradation of nascent peptide chains. HEL2 is activated when ribosomes are stalled within an mRNA following translation of prematurely polyadenylated mRNAs. Acts as a ribosome collision sensor: specifically recognizes and binds collided ribosome and ubiquitinates the 40S ribosomal proteins RPS20/uS10 and RPS3/uS3. Catalyzes 'Lys-63'-linked polyubiquitination of RPS20/uS10, promoting recruitment of the RQT (ribosome quality control trigger) complex, which drives the disassembly of stalled ribosomes, followed by degradation of nascent peptides. HEL2 also acts as an activator of the No-Go decay (NGD) pathway by mediating polyubiquitination of monoubiquitinated RPS3/uS3 and RPS7/es7: RPS3/uS3 and RPS7/es7 are first monoubiquitinated by MAG2 and MOT2/NOT4, respectively, and HEL2 mediates formation of 'Lys-63'-linked polyubiquitin chains on monoubiquitin, leading to activation of the NGD pathway in a CUE2-mediated endonucleolytic cleavage. Polyubiquitination of RPS3/uS3 also triggers degradation of non-functional 18S rRNA. The RQC pathway and the integrated stress response (ISR) antagonize each other: HEL2 prevents the activation of GCN2, while GCN2 suppresses RQC activation. The RQC pathway functions as a preventive quality control in the secretory pathway: HEL2 binds preferentially to the pre-engaged secretory ribosome-nascent chain complexes and prevents mistargeting of secretory proteins into mitochondria. Independently of its role in RQC, also involved in the polyubiquitination and proteasomal-degradation of excess histone proteins. This is E3 ubiquitin-protein ligase HEL2 from Saccharomyces cerevisiae (strain ATCC 204508 / S288c) (Baker's yeast).